A 312-amino-acid polypeptide reads, in one-letter code: Protoheme IX farnesyltransferase (312 aa).

8 helical membrane-spanning segments follow: residues 34–54, 56–76, 119–139, 152–172, 179–199, 225–245, 248–268, and 283–303; these read LVIFTALIGLLIAPGHFHPVL, ITSLLCIAVGAGASGALNMAL, ILVNWYAGALLAFTIFFYVVI, IVIGGAAGALPPVVAWVAATG, LLLFLIIFFWTPPHFWALALF, ILLYTILLVAIAAAPWPLGYF, VYGVVSLALGAGMLWFAIEVF, and LFAFSILYLFALFATLGLEAV.

The protein belongs to the UbiA prenyltransferase family. Protoheme IX farnesyltransferase subfamily.

It is found in the cell inner membrane. The catalysed reaction is heme b + (2E,6E)-farnesyl diphosphate + H2O = Fe(II)-heme o + diphosphate. The protein operates within porphyrin-containing compound metabolism; heme O biosynthesis; heme O from protoheme: step 1/1. Converts heme B (protoheme IX) to heme O by substitution of the vinyl group on carbon 2 of heme B porphyrin ring with a hydroxyethyl farnesyl side group. In Bradyrhizobium sp. (strain BTAi1 / ATCC BAA-1182), this protein is Protoheme IX farnesyltransferase.